Here is a 67-residue protein sequence, read N- to C-terminus: uncharacterized protein (67 aa).

The next 2 helical transmembrane spans lie at methionine 8–serine 28 and isoleucine 41–phenylalanine 61.

The protein resides in the cell membrane. This is an uncharacterized protein from Bacillus subtilis (strain 168).